Consider the following 886-residue polypeptide: Translation initiation factor IF-2 (886 aa).

3 disordered regions span residues 1 to 25 (MSET…LKRP), 50 to 229 (RRAL…PAEE), and 253 to 272 (KGAE…TGDE). Over residues 50-60 (RRALGEPHVLR) the composition is skewed to basic and acidic residues. A compositionally biased stretch (low complexity) spans 63–73 (APALDVVAPAP). Pro residues predominate over residues 74–83 (QAAPPAPTQQ). Low complexity predominate over residues 84–106 (PQPRVASRPQPQQRSSSGVILRS). Residues 107–181 (LTEEEREARS…KRRSESEAKR (75 aa)) show a composition bias toward basic and acidic residues. The segment covering 185–225 (GGEPAPAGANAAPRKAPALSAAPGSAAPSGQPGPAGAVGAR) has biased composition (low complexity). Residues 383–553 (SRPPVVTIMG…ALQAELLDLK (171 aa)) form the tr-type G domain. A G1 region spans residues 392 to 399 (GHVDHGKT). 392–399 (GHVDHGKT) provides a ligand contact to GTP. Residues 417–421 (GITQH) are G2. Residues 439–442 (DTPG) are G3. Residues 439-443 (DTPGH) and 493-496 (NKID) each bind GTP. The segment at 493–496 (NKID) is G4. The G5 stretch occupies residues 529-531 (SAT).

It belongs to the TRAFAC class translation factor GTPase superfamily. Classic translation factor GTPase family. IF-2 subfamily.

The protein resides in the cytoplasm. Functionally, one of the essential components for the initiation of protein synthesis. Protects formylmethionyl-tRNA from spontaneous hydrolysis and promotes its binding to the 30S ribosomal subunits. Also involved in the hydrolysis of GTP during the formation of the 70S ribosomal complex. The protein is Translation initiation factor IF-2 of Methylocella silvestris (strain DSM 15510 / CIP 108128 / LMG 27833 / NCIMB 13906 / BL2).